A 233-amino-acid chain; its full sequence is Biosynthetic peptidoglycan transglycosylase (233 aa).

Residues 8-28 (LIALPVGIFIFFNAYVYGNII) traverse the membrane as a helical segment.

It belongs to the glycosyltransferase 51 family.

The protein localises to the cell inner membrane. The catalysed reaction is [GlcNAc-(1-&gt;4)-Mur2Ac(oyl-L-Ala-gamma-D-Glu-L-Lys-D-Ala-D-Ala)](n)-di-trans,octa-cis-undecaprenyl diphosphate + beta-D-GlcNAc-(1-&gt;4)-Mur2Ac(oyl-L-Ala-gamma-D-Glu-L-Lys-D-Ala-D-Ala)-di-trans,octa-cis-undecaprenyl diphosphate = [GlcNAc-(1-&gt;4)-Mur2Ac(oyl-L-Ala-gamma-D-Glu-L-Lys-D-Ala-D-Ala)](n+1)-di-trans,octa-cis-undecaprenyl diphosphate + di-trans,octa-cis-undecaprenyl diphosphate + H(+). The protein operates within cell wall biogenesis; peptidoglycan biosynthesis. In terms of biological role, peptidoglycan polymerase that catalyzes glycan chain elongation from lipid-linked precursors. The polypeptide is Biosynthetic peptidoglycan transglycosylase (Neisseria meningitidis serogroup A / serotype 4A (strain DSM 15465 / Z2491)).